We begin with the raw amino-acid sequence, 192 residues long: Fe/S biogenesis protein NfuA (192 aa).

Residues Cys149 and Cys152 each contribute to the [4Fe-4S] cluster site.

Belongs to the NfuA family. In terms of assembly, homodimer. The cofactor is [4Fe-4S] cluster.

In terms of biological role, involved in iron-sulfur cluster biogenesis. Binds a 4Fe-4S cluster, can transfer this cluster to apoproteins, and thereby intervenes in the maturation of Fe/S proteins. Could also act as a scaffold/chaperone for damaged Fe/S proteins. This chain is Fe/S biogenesis protein NfuA, found in Shewanella loihica (strain ATCC BAA-1088 / PV-4).